We begin with the raw amino-acid sequence, 1037 residues long: MANFFIDRPIFAWVLAILLCLTGTLAIFSLPVEQYPDLAPPNVRVTANYPGASAQTLENTVTQVIEQNMTGLDNLMYMSSQSSGTGQASVTLSFKAGTDPDEAVQQVQNQLQSAMRKLPQAVQNQGVTVRKTGDTNILTIAFVSTDGSMDKQDIADYVASNIQDPLSRVNGVGDIDAYGSQYSMRIWLDPAKLNSFQMTAKDVTDAIESQNAQIAVGQLGGTPSVDKQALNATINAQSLLQTPEQFRDITLRVNQDGSEVRLGDVATVEMGAEKYDYLSRFNGKPASGLGVKLASGANEMATAELVLNRLDELAQYFPHGLEYKVAYETTSFVKASIEDVVKTLLEAIALVFLVMYLFLQNFRATLIPTIAVPVVLMGTFSVLYAFGYSVNTLTMFAMVLAIGLLVDDAIVVVENVERIMSEEGLTPREATRKSMGQIQGALVGIAMVLSAVFVPMAFFGGTTGAIYRQFSITIVAAMVLSVLVAMILTPALCATLLKPLKKGEHHGQKGFFAWFNQMFNRNAERYEKGVAKILHRSLRWIVIYVLLLGGMVFLFLRLPTSFLPLEDRGMFTTSVQLPSGSTQQQTLKVVEQIEKYYFTHEKDNIMSVFATVGSGPGGNGQNVARMFIRLKDWSERDSKTGTSFAIIERATKAFNQIKEARVIASSPPAISGLGSSAGFDMELQDHAGAGHDALMAARNQLLALAAENPELTRVRHNGLDDSPQLQIDIDQRKAQALGVAIDDINDTLQTAWGSSYVNDFMDRGRVKKVYVQAAAPYRMLPDDINLWYVRNKDGGMVPFSAFATSRWETGSPRLERYNGYSAVEIVGEAAPGVSTGTAMDIMESLVKQLPNGFGLEWTAMSYQERLSGAQAPALYAISLLVVFLCLAALYESWSVPFSVMLVVPLGVIGALLATWMRGLENDVYFQVGLLTVIGLSAKNAILIVEFANEMNQKGHDLFEATLHACRQRLRPILMTSLAFIFGVLPMATSTGAGSGGQHAVGTGVMGGMISATILAIYFVPLFFVLVRRRFPLKPRPE.

Over 1 to 9 (MANFFIDRP) the chain is Cytoplasmic. A helical transmembrane segment spans residues 10–28 (IFAWVLAILLCLTGTLAIF). At 29-339 (SLPVEQYPDL…TSFVKASIED (311 aa)) the chain is on the periplasmic side. A helical transmembrane segment spans residues 340–359 (VVKTLLEAIALVFLVMYLFL). The Cytoplasmic segment spans residues 360 to 365 (QNFRAT). The helical transmembrane segment at 366–385 (LIPTIAVPVVLMGTFSVLYA) threads the bilayer. The Periplasmic segment spans residues 386 to 391 (FGYSVN). The helical transmembrane segment at 392 to 413 (TLTMFAMVLAIGLLVDDAIVVV) threads the bilayer. Residues 414–441 (ENVERIMSEEGLTPREATRKSMGQIQGA) are Cytoplasmic-facing. The chain crosses the membrane as a helical span at residues 442 to 460 (LVGIAMVLSAVFVPMAFFG). Residues 461–473 (GTTGAIYRQFSIT) are Periplasmic-facing. Residues 474–496 (IVAAMVLSVLVAMILTPALCATL) traverse the membrane as a helical segment. Residues 497–537 (LKPLKKGEHHGQKGFFAWFNQMFNRNAERYEKGVAKILHRS) are Cytoplasmic-facing. A helical membrane pass occupies residues 538–556 (LRWIVIYVLLLGGMVFLFL). Over 557–870 (RLPTSFLPLE…SYQERLSGAQ (314 aa)) the chain is Periplasmic. Residues 871 to 890 (APALYAISLLVVFLCLAALY) traverse the membrane as a helical segment. Residues 891–896 (ESWSVP) lie on the Cytoplasmic side of the membrane. A helical transmembrane segment spans residues 897 to 916 (FSVMLVVPLGVIGALLATWM). Topologically, residues 917–922 (RGLEND) are periplasmic. The chain crosses the membrane as a helical span at residues 923–944 (VYFQVGLLTVIGLSAKNAILIV). At 945–971 (EFANEMNQKGHDLFEATLHACRQRLRP) the chain is on the cytoplasmic side. Residues 972 to 990 (ILMTSLAFIFGVLPMATST) form a helical membrane-spanning segment. Residues 991-1003 (GAGSGGQHAVGTG) lie on the Periplasmic side of the membrane. A helical transmembrane segment spans residues 1004–1026 (VMGGMISATILAIYFVPLFFVLV). Over 1027 to 1037 (RRRFPLKPRPE) the chain is Cytoplasmic.

Belongs to the resistance-nodulation-cell division (RND) (TC 2.A.6) family.

The protein localises to the cell inner membrane. Functionally, participates in the efflux of aminoglycosides. Confers resistance to a variety of these substances. In Escherichia coli (strain K12), this protein is Probable aminoglycoside efflux pump (acrD).